Here is a 250-residue protein sequence, read N- to C-terminus: Small ribosomal subunit protein uS3 (250 aa).

Residues 39-107 form the KH type-2 domain; that stretch reads VREFLTKKLK…PAQVSINEID (69 aa). Residues 215–250 are disordered; that stretch reads MNPAPAEERPAKRGRGRGEGQERRGRRGDRAADKGE. Over residues 220–250 the composition is skewed to basic and acidic residues; that stretch reads AEERPAKRGRGRGEGQERRGRRGDRAADKGE.

It belongs to the universal ribosomal protein uS3 family. In terms of assembly, part of the 30S ribosomal subunit. Forms a tight complex with proteins S10 and S14.

In terms of biological role, binds the lower part of the 30S subunit head. Binds mRNA in the 70S ribosome, positioning it for translation. This is Small ribosomal subunit protein uS3 from Acinetobacter baumannii (strain AB307-0294).